A 165-amino-acid chain; its full sequence is uncharacterized protein (165 aa).

A disordered region spans residues 51–102 (KQAAVEPGARGGERPTGSQAGVTDTPDSAPFQRRSRAPRAREQAAQAGLNQK). The segment covering 66–76 (TGSQAGVTDTP) has biased composition (polar residues).

This is an uncharacterized protein from Mus musculus (Mouse).